A 50-amino-acid chain; its full sequence is Bacterioferritin (50 aa).

Residues 1-50 form the Ferritin-like diiron domain; it reads MKGDPKVIDYLNKALRHELTAINQYWLHYRLLDNWGIKDLAKKWRAESIE. Glu18 is a binding site for Fe cation.

It belongs to the bacterioferritin family. In terms of assembly, homooligomer of 24 subunits, arranged as 12 dimers, that are packed together to form an approximately spherical molecule with a central cavity, in which large amounts of iron can be deposited. The cofactor is heme b.

The enzyme catalyses 4 Fe(2+) + O2 + 4 H(+) = 4 Fe(3+) + 2 H2O. It catalyses the reaction Fe(2+)(in) = Fe(2+)(out). Its function is as follows. Iron-storage protein, whose ferroxidase center binds Fe(2+), oxidizes it using dioxygen to Fe(3+), and participates in the subsequent Fe(3+) oxide mineral core formation within the central cavity of the BFR protein shell. May act as one of the electron carriers in the reverse electron-transport system from cytochrome c-552 to NADP(+). The chain is Bacterioferritin (bfr) from Nitrobacter winogradskyi (Nitrobacter agilis).